Consider the following 197-residue polypeptide: Probable GTP-binding protein EngB (197 aa).

The EngB-type G domain maps to 22 to 195 (GFPEIGLAGR…WQWIEAHTVG (174 aa)). GTP contacts are provided by residues 30–37 (GRSNVGKS), 57–61 (GKTQT), 75–78 (DVPG), 142–145 (TKSD), and 174–176 (FSA). Mg(2+) is bound by residues Ser37 and Thr59.

The protein belongs to the TRAFAC class TrmE-Era-EngA-EngB-Septin-like GTPase superfamily. EngB GTPase family. Mg(2+) serves as cofactor.

Its function is as follows. Necessary for normal cell division and for the maintenance of normal septation. The sequence is that of Probable GTP-binding protein EngB from Lactiplantibacillus plantarum (strain ATCC BAA-793 / NCIMB 8826 / WCFS1) (Lactobacillus plantarum).